The sequence spans 560 residues: Terminal uridylyltransferase Tailor (560 aa).

Residues 169 to 197 (EQHPKPNPNNQPVQPHPTHQTKQEKKQAQ) form a disordered region. Residues 176-188 (PNNQPVQPHPTHQ) are compositionally biased toward low complexity. Positions 278 and 280 each coordinate Mg(2+). The 68-residue stretch at 455–522 (LRNFFAYFAK…VVQDPIQLNH (68 aa)) folds into the PAP-associated domain.

It depends on Mg(2+) as a cofactor.

The protein resides in the cytoplasm. It catalyses the reaction RNA(n) + UTP = RNA(n)-3'-uridine ribonucleotide + diphosphate. Uridylyltransferase which mediates terminal uridylation of miRNAs, leading to their degradation. Has high specificity for splicing-derived miRNAs (mirtrons) and other miRNA substrates containing a 3'-G terminal nucleotide. Appears to be a major suppressor of mirtron biogenesis. This Drosophila melanogaster (Fruit fly) protein is Terminal uridylyltransferase Tailor.